Here is a 368-residue protein sequence, read N- to C-terminus: MVVLGSTGSIGKNALKIAKKFGVEIEALSCGKNIALINEQIKVFKPKKVAILDPSDLNNLEPLGAEVFVGLDGIDAMIEECVSNLVLNAIVGVAGLKASFKSLQRNKKLALANKESLVSAGNLLDISQITPVDSEHFGLWALLQNKTLKPKSLIISASGGAFRDTPLELIAIQNAQNALKHPNWSMGSKITIDSASMVNKLFEILETYWLFGTSLKIDALIERSSIVHALVEFEDNSIIVHLASADMQLPISYAIDPKLASLNASIKPLDLYALNAIKFEPISMERYTLWRYKDLLLENPKLGVVLNASNEVAMEKFLNQEIAFGGLIQTISQALELYAKKSFKLSSLDEVLELDKEVRERFENVAGV.

The NADPH site is built by threonine 7, glycine 8, serine 9, isoleucine 10, glycine 31, lysine 32, asparagine 33, and asparagine 113. Residue lysine 114 coordinates 1-deoxy-D-xylulose 5-phosphate. Glutamate 115 contributes to the NADPH binding site. Residue aspartate 133 participates in Mn(2+) binding. Serine 134, glutamate 135, serine 158, and histidine 181 together coordinate 1-deoxy-D-xylulose 5-phosphate. Glutamate 135 serves as a coordination point for Mn(2+). Glycine 187 contributes to the NADPH binding site. Serine 194, asparagine 199, lysine 200, and glutamate 203 together coordinate 1-deoxy-D-xylulose 5-phosphate. Glutamate 203 serves as a coordination point for Mn(2+).

The protein belongs to the DXR family. Requires Mg(2+) as cofactor. Mn(2+) serves as cofactor.

The enzyme catalyses 2-C-methyl-D-erythritol 4-phosphate + NADP(+) = 1-deoxy-D-xylulose 5-phosphate + NADPH + H(+). Its pathway is isoprenoid biosynthesis; isopentenyl diphosphate biosynthesis via DXP pathway; isopentenyl diphosphate from 1-deoxy-D-xylulose 5-phosphate: step 1/6. Catalyzes the NADPH-dependent rearrangement and reduction of 1-deoxy-D-xylulose-5-phosphate (DXP) to 2-C-methyl-D-erythritol 4-phosphate (MEP). This is 1-deoxy-D-xylulose 5-phosphate reductoisomerase from Helicobacter pylori (strain HPAG1).